A 312-amino-acid chain; its full sequence is Tumor necrosis factor receptor type 1-associated DEATH domain protein (312 aa).

Residues 147-163 carry the Nuclear export signal motif; the sequence is LRDEELTELENALRNLT. Residues 166–200 form a disordered region; that stretch reads SAGGQGSDVQGTPAPLQSLAPSPPEEKPPPPQPGQ. One can recognise a Death domain in the interval 215 to 305; sequence NLQDQQKFAR…SLAEDLLGLA (91 aa). An interaction with KRT14 and KRT18 region spans residues 222–289; the sequence is FARSVGLKWR…ATLQRLVEAL (68 aa). The Nuclear localization signal motif lies at 231 to 244; it reads RKVGRSLQRSCRAL.

In terms of assembly, stimulation of TNF-alpha receptor TNFRSF1A leads to the formation of two distinct signaling complexes. Plasma membrane-bound complex I is composed of TNFRSF1A, TRADD, RIPK1, TRAF2 and BIRC2/c-IAP1 or BIRC3 which interacts with CHUCK/IKK-alpha, IKBKB/IKK-beta and IKBKG/IKK-gamma promoting cell survival. Subsequently, TRADD, RIPK1 and TRAF2 dissociate from TNFRSF1A and form cytoplasmic complex II with FADD and caspase CASP8 promoting cell apoptosis. Within complex I, interacts with TNFRSF1A/TNFR1, TRAF2 and kinase RIPK1. Within complex I, interacts with TRPC4AP; the interaction promotes NF-kappa B activation. UXT1 associates with complex I; the interaction prevents the formation of complex II. Within complex I Interacts with scaffold protein DAB2IP. Interacts with autophagy receptor SQSTM1. Interacts with E3 ligase TRIP12. Interacts with kinase HIPK2. Interacts with keratin KRT14. Interacts with keratin KRT18. Interacts with keratins KRT16 and KRT17. Interacts with FADD. Interacts with TOMM70. Interacts with TMC8; the interaction impairs the formation of complex I and facilites complex II formation.

The protein resides in the nucleus. It localises to the cytoplasm. The protein localises to the cytoskeleton. Its function is as follows. Adapter molecule for TNFRSF1A/TNFR1 that specifically associates with the cytoplasmic domain of activated TNFRSF1A/TNFR1 mediating its interaction with FADD. Overexpression of TRADD leads to two major TNF-induced responses, apoptosis and activation of NF-kappa-B. The nuclear form acts as a tumor suppressor by preventing ubiquitination and degradation of isoform p19ARF/ARF of CDKN2A by TRIP12: acts by interacting with TRIP12, leading to disrupt interaction between TRIP12 and isoform p19ARF/ARF of CDKN2A. This Bos taurus (Bovine) protein is Tumor necrosis factor receptor type 1-associated DEATH domain protein.